The primary structure comprises 245 residues: Thiopurine S-methyltransferase (245 aa).

Tryptophan 29–phenylalanine 40 is an S-adenosyl-L-methionine binding site. Position 40 (phenylalanine 40) interacts with substrate. At lysine 58 the chain carries N6-acetyllysine. The S-adenosyl-L-methionine site is built by leucine 69, glutamate 90, and arginine 152.

Belongs to the class I-like SAM-binding methyltransferase superfamily. TPMT family. In terms of assembly, monomer.

It localises to the cytoplasm. The catalysed reaction is S-adenosyl-L-methionine + a thiopurine = S-adenosyl-L-homocysteine + a thiopurine S-methylether.. The sequence is that of Thiopurine S-methyltransferase (TPMT) from Canis lupus familiaris (Dog).